An 84-amino-acid polypeptide reads, in one-letter code: Beta-defensin 119 (84 aa).

The signal sequence occupies residues 1-21 (MKFLFLFLAILLATKIPVISG). 3 disulfides stabilise this stretch: C28-C55, C35-C49, and C39-C56.

This sequence belongs to the beta-defensin family.

It localises to the secreted. Has antibacterial activity. The polypeptide is Beta-defensin 119 (DEFB119) (Macaca fascicularis (Crab-eating macaque)).